We begin with the raw amino-acid sequence, 418 residues long: Phosphoglycerate kinase (418 aa).

Substrate is bound by residues 18-20 (DFN), Arg-34, 57-60 (HLGR), Arg-115, and Arg-171. Residues Lys-224, Gly-315, Glu-346, and 375-378 (GGDS) contribute to the ATP site.

Belongs to the phosphoglycerate kinase family. In terms of assembly, monomer.

It is found in the cytoplasm. The catalysed reaction is (2R)-3-phosphoglycerate + ATP = (2R)-3-phospho-glyceroyl phosphate + ADP. It participates in carbohydrate degradation; glycolysis; pyruvate from D-glyceraldehyde 3-phosphate: step 2/5. This is Phosphoglycerate kinase from Porphyromonas gingivalis (strain ATCC BAA-308 / W83).